Consider the following 368-residue polypeptide: Phospho-N-acetylmuramoyl-pentapeptide-transferase (368 aa).

9 consecutive transmembrane segments (helical) span residues 2–22, 51–71, 80–100, 117–137, 167–187, 193–213, 234–254, 271–291, and 340–360; these read IALI…TPLL, TLGG…SALY, PSWS…LGFI, GGKF…ALLI, VAII…TNAV, LDGL…IIAF, PLDL…FLWY, LGGL…AVVL, and FWMI…GDWV.

The protein belongs to the glycosyltransferase 4 family. MraY subfamily. Mg(2+) is required as a cofactor.

Its subcellular location is the cell membrane. The enzyme catalyses UDP-N-acetyl-alpha-D-muramoyl-L-alanyl-gamma-D-glutamyl-meso-2,6-diaminopimeloyl-D-alanyl-D-alanine + di-trans,octa-cis-undecaprenyl phosphate = di-trans,octa-cis-undecaprenyl diphospho-N-acetyl-alpha-D-muramoyl-L-alanyl-D-glutamyl-meso-2,6-diaminopimeloyl-D-alanyl-D-alanine + UMP. It participates in cell wall biogenesis; peptidoglycan biosynthesis. Catalyzes the initial step of the lipid cycle reactions in the biosynthesis of the cell wall peptidoglycan: transfers peptidoglycan precursor phospho-MurNAc-pentapeptide from UDP-MurNAc-pentapeptide onto the lipid carrier undecaprenyl phosphate, yielding undecaprenyl-pyrophosphoryl-MurNAc-pentapeptide, known as lipid I. This chain is Phospho-N-acetylmuramoyl-pentapeptide-transferase, found in Bifidobacterium longum (strain DJO10A).